A 486-amino-acid polypeptide reads, in one-letter code: Membrane-bound lytic murein transglycosylase F (486 aa).

The signal sequence occupies residues 1 to 21 (MTRIKLSYFTIGLVALLLALA). A non-LT domain region spans residues 22–268 (LWPNIPWRNG…RLEEKYLGHV (247 aa)). The interval 269 to 486 (GSFDYVDTKT…VVGPGWSIGD (218 aa)) is LT domain. Residue glutamate 313 is part of the active site.

This sequence in the N-terminal section; belongs to the bacterial solute-binding protein 3 family. The protein in the C-terminal section; belongs to the transglycosylase Slt family.

It is found in the cell outer membrane. It carries out the reaction Exolytic cleavage of the (1-&gt;4)-beta-glycosidic linkage between N-acetylmuramic acid (MurNAc) and N-acetylglucosamine (GlcNAc) residues in peptidoglycan, from either the reducing or the non-reducing ends of the peptidoglycan chains, with concomitant formation of a 1,6-anhydrobond in the MurNAc residue.. Murein-degrading enzyme that degrades murein glycan strands and insoluble, high-molecular weight murein sacculi, with the concomitant formation of a 1,6-anhydromuramoyl product. Lytic transglycosylases (LTs) play an integral role in the metabolism of the peptidoglycan (PG) sacculus. Their lytic action creates space within the PG sacculus to allow for its expansion as well as for the insertion of various structures such as secretion systems and flagella. The chain is Membrane-bound lytic murein transglycosylase F from Yersinia pseudotuberculosis serotype I (strain IP32953).